The chain runs to 42 residues: MRDIKTYLSVAPVLATLWFGSLAGLLIEINRLFPDALAFPFF.

Residues tyrosine 7 to isoleucine 27 traverse the membrane as a helical segment.

This sequence belongs to the PsaJ family.

The protein resides in the plastid. It localises to the chloroplast thylakoid membrane. In terms of biological role, may help in the organization of the PsaE and PsaF subunits. The chain is Photosystem I reaction center subunit IX from Chloranthus spicatus (Chulantree).